Consider the following 361-residue polypeptide: MAGATAATPMDIDAAAPPPGAAAKGKAPLSSTPGGRAAPWVEKYRPQSLGDVAAHRDIVDTIDRLTNENRLPHLLLYGPPGTGKTSTILAVARKLYGSQYGNMILELNASDERGIDVVRQQIQDFASARSLSFGAKQSVKMVLLDEADAMTKDAQFALRRVIEKHTRSTRFALICNHVNKIIPALQSRCTRFRFAPLDGTHVRERLKHIIQSEGLDVDDGGLTALVRLSNGDMRKALNILQSTHMASKQITEEAVYLCTGNPMPKDIEQIAYWLLNESFSTSFKCISDMKMRKGLALVDIIREVTMFVFKIQMPSDVRIKLINDLADIEYRLSFACNDKLQLGALISTFTGARTAMVAAAH.

Positions 1–28 (MAGATAATPMDIDAAAPPPGAAAKGKAP) are enriched in low complexity. The tract at residues 1–39 (MAGATAATPMDIDAAAPPPGAAAKGKAPLSSTPGGRAAP) is disordered. An ATP-binding site is contributed by 77–84 (YGPPGTGK).

The protein belongs to the activator 1 small subunits family. Heterotetramer of subunits RFC2, RFC3, RFC4 and RFC5 that can form a complex with RFC1. In terms of tissue distribution, expressed in roots, leaves, shoot apical meristem (SAM), flag leaves and panicles.

The protein localises to the nucleus. May be involved in DNA replication and thus regulate cell proliferation. This is Replication factor C subunit 3 (RFC3) from Oryza sativa subsp. japonica (Rice).